A 78-amino-acid polypeptide reads, in one-letter code: Large ribosomal subunit protein bL28 (78 aa).

Positions 1-28 are disordered; the sequence is MSAICQVTGRQPGYGKSVSHSHRRTSRR.

Belongs to the bacterial ribosomal protein bL28 family.

This Corynebacterium diphtheriae (strain ATCC 700971 / NCTC 13129 / Biotype gravis) protein is Large ribosomal subunit protein bL28.